Reading from the N-terminus, the 302-residue chain is Transcription factor bHLH7 (302 aa).

Residues 124–154 are disordered; the sequence is QPMSQPAPPMPHQQSTIRPRVRARRGQATDP. Residues 150–199 enclose the bHLH domain; sequence QATDPHSIAERLRRERIAERIRSLQELVPTVNKTDRAAMIDEIVDYVKFL.

In terms of assembly, homodimer. As to expression, expressed constitutively in roots, leaves, stems and flowers.

Its subcellular location is the nucleus. In Arabidopsis thaliana (Mouse-ear cress), this protein is Transcription factor bHLH7 (BHLH7).